Consider the following 130-residue polypeptide: Small ribosomal subunit protein uS8 (130 aa).

Belongs to the universal ribosomal protein uS8 family. Part of the 30S ribosomal subunit.

Functionally, one of the primary rRNA binding proteins, it binds directly to 16S rRNA central domain where it helps coordinate assembly of the platform of the 30S subunit. The protein is Small ribosomal subunit protein uS8 of Pyrobaculum neutrophilum (strain DSM 2338 / JCM 9278 / NBRC 100436 / V24Sta) (Thermoproteus neutrophilus).